The primary structure comprises 178 residues: Inorganic pyrophosphatase (178 aa).

3 residues coordinate substrate: lysine 30, arginine 44, and tyrosine 56. The Mg(2+) site is built by aspartate 66, aspartate 71, and aspartate 103. Tyrosine 142 contacts substrate.

This sequence belongs to the PPase family. In terms of assembly, homohexamer. Mg(2+) is required as a cofactor.

It localises to the cytoplasm. The catalysed reaction is diphosphate + H2O = 2 phosphate + H(+). Functionally, catalyzes the hydrolysis of inorganic pyrophosphate (PPi) forming two phosphate ions. The chain is Inorganic pyrophosphatase from Xylella fastidiosa (strain 9a5c).